An 811-amino-acid polypeptide reads, in one-letter code: Glycerol-3-phosphate acyltransferase (811 aa).

Residues 308 to 313 carry the HXXXXD motif motif; sequence CHRSHM.

The protein belongs to the GPAT/DAPAT family.

Its subcellular location is the cell inner membrane. The enzyme catalyses sn-glycerol 3-phosphate + an acyl-CoA = a 1-acyl-sn-glycero-3-phosphate + CoA. Its pathway is phospholipid metabolism; CDP-diacylglycerol biosynthesis; CDP-diacylglycerol from sn-glycerol 3-phosphate: step 1/3. The chain is Glycerol-3-phosphate acyltransferase from Pseudoalteromonas atlantica (strain T6c / ATCC BAA-1087).